Reading from the N-terminus, the 136-residue chain is MQVEGFEFPDELYYYPEEHVWVKIEGDMVTVGITSLGQYMAGKIFQVTTKNKGEKVTPKSVIFTLESAKWIGKFRLPVEGEIVDINDEVVKNPTLINEKPYDAWIVKIKGDIKKEKLLPVSEAVKIFENDAKRVIR.

The 82-residue stretch at 28 to 109 folds into the Lipoyl-binding domain; the sequence is MVTVGITSLG…PYDAWIVKIK (82 aa). K69 is subject to N6-lipoyllysine.

The protein belongs to the GcvH family. The glycine cleavage system is composed of four proteins: P, T, L and H. (R)-lipoate is required as a cofactor.

The glycine cleavage system catalyzes the degradation of glycine. The H protein shuttles the methylamine group of glycine from the P protein to the T protein. This chain is Probable glycine cleavage system H protein 3, found in Sulfurisphaera tokodaii (strain DSM 16993 / JCM 10545 / NBRC 100140 / 7) (Sulfolobus tokodaii).